The primary structure comprises 123 residues: UPF0102 protein PputW619_0932 (123 aa).

Belongs to the UPF0102 family.

In Pseudomonas putida (strain W619), this protein is UPF0102 protein PputW619_0932.